Consider the following 384-residue polypeptide: S-adenosylmethionine synthase (384 aa).

His-15 contacts ATP. Asp-17 contributes to the Mg(2+) binding site. Glu-43 contributes to the K(+) binding site. The L-methionine site is built by Glu-56 and Gln-99. The tract at residues 99-109 (QSPDINQGVDR) is flexible loop. Residues 164–166 (DAK), 230–231 (RF), Asp-239, 245–246 (RK), Ala-262, and Lys-266 each bind ATP. Asp-239 is a binding site for L-methionine. An L-methionine-binding site is contributed by Lys-270.

The protein belongs to the AdoMet synthase family. As to quaternary structure, homotetramer; dimer of dimers. It depends on Mg(2+) as a cofactor. Requires K(+) as cofactor.

Its subcellular location is the cytoplasm. The catalysed reaction is L-methionine + ATP + H2O = S-adenosyl-L-methionine + phosphate + diphosphate. Its pathway is amino-acid biosynthesis; S-adenosyl-L-methionine biosynthesis; S-adenosyl-L-methionine from L-methionine: step 1/1. Its function is as follows. Catalyzes the formation of S-adenosylmethionine (AdoMet) from methionine and ATP. The overall synthetic reaction is composed of two sequential steps, AdoMet formation and the subsequent tripolyphosphate hydrolysis which occurs prior to release of AdoMet from the enzyme. This Escherichia fergusonii (strain ATCC 35469 / DSM 13698 / CCUG 18766 / IAM 14443 / JCM 21226 / LMG 7866 / NBRC 102419 / NCTC 12128 / CDC 0568-73) protein is S-adenosylmethionine synthase.